We begin with the raw amino-acid sequence, 189 residues long: Transcription factor FapR (189 aa).

This sequence belongs to the FapR family.

In terms of biological role, transcriptional factor involved in regulation of membrane lipid biosynthesis by repressing genes involved in fatty acid and phospholipid metabolism. The protein is Transcription factor FapR of Listeria innocua serovar 6a (strain ATCC BAA-680 / CLIP 11262).